A 283-amino-acid polypeptide reads, in one-letter code: Pantothenate synthetase (283 aa).

31-38 (MGALHDGH) is an ATP binding site. His-38 acts as the Proton donor in catalysis. Gln-62 is a binding site for (R)-pantoate. Position 62 (Gln-62) interacts with beta-alanine. Position 148 to 151 (148 to 151 (GKKD)) interacts with ATP. Gln-154 lines the (R)-pantoate pocket. ATP contacts are provided by residues Ile-177 and 185 to 188 (KSSR).

It belongs to the pantothenate synthetase family. Homodimer.

It is found in the cytoplasm. It catalyses the reaction (R)-pantoate + beta-alanine + ATP = (R)-pantothenate + AMP + diphosphate + H(+). It functions in the pathway cofactor biosynthesis; (R)-pantothenate biosynthesis; (R)-pantothenate from (R)-pantoate and beta-alanine: step 1/1. Functionally, catalyzes the condensation of pantoate with beta-alanine in an ATP-dependent reaction via a pantoyl-adenylate intermediate. This Oceanobacillus iheyensis (strain DSM 14371 / CIP 107618 / JCM 11309 / KCTC 3954 / HTE831) protein is Pantothenate synthetase.